The chain runs to 1343 residues: DNA-directed RNA polymerase subunit beta (1343 aa).

The protein belongs to the RNA polymerase beta chain family. As to quaternary structure, the RNAP catalytic core consists of 2 alpha, 1 beta, 1 beta' and 1 omega subunit. When a sigma factor is associated with the core the holoenzyme is formed, which can initiate transcription.

The enzyme catalyses RNA(n) + a ribonucleoside 5'-triphosphate = RNA(n+1) + diphosphate. DNA-dependent RNA polymerase catalyzes the transcription of DNA into RNA using the four ribonucleoside triphosphates as substrates. In Shewanella pealeana (strain ATCC 700345 / ANG-SQ1), this protein is DNA-directed RNA polymerase subunit beta.